We begin with the raw amino-acid sequence, 87 residues long: Toxin Cll3 (87 aa).

Positions 1-19 (MNSLLMITACLAVIGTVWA) are cleaved as a signal peptide. The 66-residue stretch at 20–85 (KEGYIVNYYD…VWPLPNKTCY (66 aa)) folds into the LCN-type CS-alpha/beta domain. 4 disulfide bridges follow: cysteine 31/cysteine 84, cysteine 35/cysteine 60, cysteine 44/cysteine 65, and cysteine 48/cysteine 67. Position 85 is a tyrosine amide (tyrosine 85).

This sequence belongs to the long (4 C-C) scorpion toxin superfamily. Sodium channel inhibitor family. Beta subfamily. Expressed by the venom gland.

It is found in the secreted. Beta toxins bind voltage-independently at site-4 of sodium channels (Nav) and shift the voltage of activation toward more negative potentials thereby affecting sodium channel activation and promoting spontaneous and repetitive firing. This chain is Toxin Cll3, found in Centruroides limpidus (Mexican scorpion).